A 47-amino-acid polypeptide reads, in one-letter code: Lysis protein for colicin E9 (47 aa).

The signal sequence occupies residues 1–19; sequence MKKITGIILLLLAAIILAA. C20 carries N-palmitoyl cysteine lipidation. A lipid anchor (S-diacylglycerol cysteine) is attached at C20.

The protein resides in the cell outer membrane. In terms of biological role, lysis proteins are required for both colicin release and partial cell lysis. This is Lysis protein for colicin E9 (lys) from Escherichia coli.